Reading from the N-terminus, the 550-residue chain is Transcription factor p65 (550 aa).

Met-1 carries the post-translational modification N-acetylmethionine. In terms of domain architecture, RHD spans 16 to 190 (ASGPYVEIIE…HPIFDNRAPN (175 aa)). Lys-37 participates in a covalent cross-link: Glycyl lysine isopeptide (Lys-Gly) (interchain with G-Cter in SUMO3). Residue Cys-38 is modified to Cysteine persulfide; alternate. An S-nitrosocysteine; alternate modification is found at Cys-38. Lys-122, Lys-123, Lys-218, and Lys-221 each carry N6-acetyllysine. Glycyl lysine isopeptide (Lys-Gly) (interchain with G-Cter in SUMO3); alternate cross-links involve residues Lys-122 and Lys-123. Residue Thr-254 is modified to Phosphothreonine. 2 positions are modified to phosphoserine: Ser-276 and Ser-281. Positions 301-304 (KRKR) match the Nuclear localization signal motif. An N6-acetyllysine; alternate modification is found at Lys-310. Lys-310 bears the N6-methyllysine mark. A Phosphoserine modification is found at Ser-311. Transcriptional activation domain stretches follow at residues 342–388 (PKPA…APVL) and 414–476 (PGPP…EFQQ). The residue at position 434 (Thr-434) is a Phosphothreonine. Ser-468 carries the post-translational modification Phosphoserine. The residue at position 505 (Thr-505) is a Phosphothreonine. Residues 520–550 (TSGLPNGLSGDEDFSSIADMDFSALLSQISS) are transcriptional activation domain 2. Ser-535 carries the phosphoserine modification. Positions 535-543 (SIADMDFSA) match the 9aaTAD motif.

In terms of assembly, component of the NF-kappa-B p65-p50 complex. Component of the NF-kappa-B p65-c-Rel complex. Homodimer; component of the NF-kappa-B p65-p65 complex. Component of the NF-kappa-B p65-p52 complex. May interact with ETHE1. Binds TLE5 and TLE1. Interacts with TP53BP2. Binds to and is phosphorylated by the activated form of either RPS6KA4 or RPS6KA5. Interacts with ING4 and this interaction may be indirect. Interacts with CARM1, USP48 and UNC5CL. Interacts with IRAK1BP1. Interacts with NFKBID. Interacts with NFKBIA. Interacts with GSK3B. Interacts with NFKBIB. Interacts with NFKBIE. Interacts with NFKBIZ. Interacts with EHMT1 (via ANK repeats). Part of a 70-90 kDa complex at least consisting of CHUK, IKBKB, NFKBIA, RELA, ELP1 and MAP3K14. Interacts with HDAC3; HDAC3 mediates the deacetylation of RELA. Interacts with HDAC1; the interaction requires non-phosphorylated RELA. Interacts with CBP; the interaction requires phosphorylated RELA. Interacts (phosphorylated at 'Thr-254') with PIN1; the interaction inhibits p65 binding to NFKBIA. Interacts with SOCS1. Interacts with UXT. Interacts with MTDH and PHF11. Interacts with ARRB2. Interacts with NFKBIA (when phosphorylated), the interaction is direct; phosphorylated NFKBIA is part of a SCF(BTRC)-like complex lacking CUL1. Interacts with RNF25. Interacts (via C-terminus) with DDX1. Interacts with UFL1 and COMMD1. Interacts with BRMS1; this promotes deacetylation of 'Lys-310'. Interacts with NOTCH2. Directly interacts with MEN1; this interaction represses NFKB-mediated transactivation. Interacts with AKIP1, which promotes the phosphorylation and nuclear retention of RELA. Interacts (via the RHD) with GFI1; the interaction, after bacterial lipopolysaccharide (LPS) stimulation, inhibits the transcriptional activity by interfering with the DNA-binding activity to target gene promoter DNA. Interacts (when acetylated at Lys-310) with BRD4; leading to activation of the NF-kappa-B pathway. Interacts with MEFV. Interacts with CLOCK. Interacts (via N-terminus) with CPEN1; this interaction induces proteolytic cleavage of p65/RELA subunit and inhibition of NF-kappa-B transcriptional activity. Interacts with FOXP3. Interacts with CDK5RAP3; stimulates the interaction of RELA with HDAC1, HDAC2 and HDAC3 thereby inhibiting NF-kappa-B transcriptional activity. Interacts with DHX9; this interaction is direct and activates NF-kappa-B-mediated transcription. Interacts with LRRC25. Interacts with TBX21. Interacts with KAT2A. Interacts with ZBTB7A; involved in the control by RELA of the accessibility of target gene promoters. Directly interacts with DDX3X; this interaction may trap RELA in the cytoplasm, impairing nuclear relocalization upon TNF activating signals. Interacts with PHF2. Interacts with MKRN2; the interaction leads to its polyubiquitination and proteasome-dependent degradation. Interacts with ECSIT. Interacts with RAB28; the interaction contributes to RELA transport from cytoplasm to nucleus. Ubiquitinated by RNF182, leading to its proteasomal degradation. Degradation is required for termination of NF-kappa-B response. Polyubiquitinated via 'Lys-29'-linked ubiquitin; leading to lysosomal degradation. Post-translationally, monomethylated at Lys-310 by SETD6. Monomethylation at Lys-310 is recognized by the ANK repeats of EHMT1 and promotes the formation of repressed chromatin at target genes, leading to down-regulation of NF-kappa-B transcription factor activity. Phosphorylation at Ser-311 disrupts the interaction with EHMT1 without preventing monomethylation at Lys-310 and relieves the repression of target genes. In terms of processing, phosphorylation at Ser-311 disrupts the interaction with EHMT1 and promotes transcription factor activity. Phosphorylation on Ser-535 stimulates acetylation on Lys-310 and interaction with CBP; the phosphorylated and acetylated forms show enhanced transcriptional activity. Phosphorylation at Ser-276 by RPS6KA4 and RPS6KA5 promotes its transactivation and transcriptional activities. Phosphorylation at Ser-75 by herpes simplex virus 1/HHV-1 inhibits NF-kappa-B activation. Post-translationally, reversibly acetylated; the acetylation seems to be mediated by CBP, the deacetylation by HDAC3 and SIRT2. Acetylation at Lys-122 enhances DNA binding and impairs association with NFKBIA. Acetylation at Lys-310 is required for full transcriptional activity in the absence of effects on DNA binding and NFKBIA association. Acetylation at Lys-310 promotes interaction with BRD4. Acetylation can also lower DNA-binding and results in nuclear export. Interaction with BRMS1 promotes deacetylation of Lys-310. Lys-310 is deacetylated by SIRT2. In terms of processing, S-nitrosylation of Cys-38 inactivates the enzyme activity. Sulfhydration at Cys-38 mediates the anti-apoptotic activity by promoting the interaction with RPS3 and activating the transcription factor activity. Post-translationally, sumoylation by PIAS3 negatively regulates DNA-bound activated NF-kappa-B. In terms of processing, proteolytically cleaved within a conserved N-terminus region required for base-specific contact with DNA in a CPEN1-mediated manner, and hence inhibits NF-kappa-B transcriptional activity.

It localises to the nucleus. The protein localises to the cytoplasm. Functionally, NF-kappa-B is a pleiotropic transcription factor present in almost all cell types and is the endpoint of a series of signal transduction events that are initiated by a vast array of stimuli related to many biological processes such as inflammation, immunity, differentiation, cell growth, tumorigenesis and apoptosis. NF-kappa-B is a homo- or heterodimeric complex formed by the Rel-like domain-containing proteins RELA/p65, RELB, NFKB1/p105, NFKB1/p50, REL and NFKB2/p52. The heterodimeric RELA-NFKB1 complex appears to be most abundant one. The dimers bind at kappa-B sites in the DNA of their target genes and the individual dimers have distinct preferences for different kappa-B sites that they can bind with distinguishable affinity and specificity. Different dimer combinations act as transcriptional activators or repressors, respectively. The NF-kappa-B heterodimeric RELA-NFKB1 and RELA-REL complexes, for instance, function as transcriptional activators. NF-kappa-B is controlled by various mechanisms of post-translational modification and subcellular compartmentalization as well as by interactions with other cofactors or corepressors. NF-kappa-B complexes are held in the cytoplasm in an inactive state complexed with members of the NF-kappa-B inhibitor (I-kappa-B) family. In a conventional activation pathway, I-kappa-B is phosphorylated by I-kappa-B kinases (IKKs) in response to different activators, subsequently degraded thus liberating the active NF-kappa-B complex which translocates to the nucleus. The inhibitory effect of I-kappa-B on NF-kappa-B through retention in the cytoplasm is exerted primarily through the interaction with RELA. RELA shows a weak DNA-binding site which could contribute directly to DNA binding in the NF-kappa-B complex. Besides its activity as a direct transcriptional activator, it is also able to modulate promoters accessibility to transcription factors and thereby indirectly regulate gene expression. Associates with chromatin at the NF-kappa-B promoter region via association with DDX1. Essential for cytokine gene expression in T-cells. The NF-kappa-B homodimeric RELA-RELA complex appears to be involved in invasin-mediated activation of IL-8 expression. Key transcription factor regulating the IFN response during SARS-CoV-2 infection. This chain is Transcription factor p65, found in Rattus norvegicus (Rat).